Reading from the N-terminus, the 246-residue chain is ATP synthase subunit a (246 aa).

5 consecutive transmembrane segments (helical) span residues 34–54, 92–112, 130–150, 155–175, and 196–216; these read GQTMITTWVVMLLLIGLTFIG, WVPLIGTIFLFVLFANWLGQL, DINTTVALSLIALVSYIYAGL, FGYFKHYFESPILAAVWVLEF, and VVAVLILLVPILVPVPLMILF.

It belongs to the ATPase A chain family. As to quaternary structure, F-type ATPases have 2 components, CF(1) - the catalytic core - and CF(0) - the membrane proton channel. CF(1) has five subunits: alpha(3), beta(3), gamma(1), delta(1), epsilon(1). CF(0) has four main subunits: a, b, b' and c.

The protein localises to the cell inner membrane. In terms of biological role, key component of the proton channel; it plays a direct role in the translocation of protons across the membrane. The chain is ATP synthase subunit a from Gloeobacter violaceus (strain ATCC 29082 / PCC 7421).